A 700-amino-acid polypeptide reads, in one-letter code: Elongation factor G (700 aa).

The tr-type G domain occupies 10-286; the sequence is TKVRNIGIMA…AVIDYLPSPL (277 aa). Residues 19–26, 83–87, and 137–140 contribute to the GTP site; these read AHIDAGKT, DTPGH, and NKMD.

Belongs to the TRAFAC class translation factor GTPase superfamily. Classic translation factor GTPase family. EF-G/EF-2 subfamily.

Its subcellular location is the cytoplasm. In terms of biological role, catalyzes the GTP-dependent ribosomal translocation step during translation elongation. During this step, the ribosome changes from the pre-translocational (PRE) to the post-translocational (POST) state as the newly formed A-site-bound peptidyl-tRNA and P-site-bound deacylated tRNA move to the P and E sites, respectively. Catalyzes the coordinated movement of the two tRNA molecules, the mRNA and conformational changes in the ribosome. The polypeptide is Elongation factor G (Kineococcus radiotolerans (strain ATCC BAA-149 / DSM 14245 / SRS30216)).